The following is a 91-amino-acid chain: Acylphosphatase (91 aa).

The 86-residue stretch at 6 to 91 (CMRCYISGRV…WEDYISFDVL (86 aa)) folds into the Acylphosphatase-like domain. Residues arginine 21 and asparagine 39 contribute to the active site.

The protein belongs to the acylphosphatase family.

It catalyses the reaction an acyl phosphate + H2O = a carboxylate + phosphate + H(+). This Legionella pneumophila (strain Corby) protein is Acylphosphatase (acyP).